The chain runs to 259 residues: 1,2-dihydroxy-1,2-dihydronaphthalene dehydrogenase (259 aa).

NAD(+) contacts are provided by residues 8–35 (AITG…SALV) and aspartate 58. Serine 140 serves as a coordination point for substrate. Tyrosine 153 (proton acceptor) is an active-site residue. Position 157 (lysine 157) interacts with NAD(+).

It belongs to the short-chain dehydrogenases/reductases (SDR) family.

It carries out the reaction (1R,2S)-1,2-dihydronaphthalene-1,2-diol + NAD(+) = naphthalene-1,2-diol + NADH + H(+). The protein operates within aromatic compound metabolism; naphthalene degradation. In terms of biological role, catalyzes the oxidation of naphthalene dihydrodiol into 1,2-dihydroxynaphthalene. The protein is 1,2-dihydroxy-1,2-dihydronaphthalene dehydrogenase of Ralstonia sp.